The sequence spans 394 residues: Putative F-box protein At5g66830 (394 aa).

Residues 17-63 enclose the F-box domain; it reads DWCWSKLPSDLMQFVFDRLGFADFQRAKSVCSSWLSVSRNSQPNNQI.

This Arabidopsis thaliana (Mouse-ear cress) protein is Putative F-box protein At5g66830.